The primary structure comprises 478 residues: G2/mitotic-specific cyclin-B (478 aa).

The disordered stretch occupies residues 1-153 (MNENDENGPS…KTIQQEEPPR (153 aa)). Over residues 16 to 31 (AKAAALTTDAPAANGA) the composition is skewed to low complexity. The span at 65-74 (DNGETKDAKK) shows a compositional bias: basic and acidic residues. A compositionally biased stretch (polar residues) spans 77-102 (SKTGLTSKATMQSGGVQKLSRSNLSR). The span at 110–121 (NNVKKPATEAKR) shows a compositional bias: basic and acidic residues. Residues 133-145 (KRTSSQKSLQEKT) are compositionally biased toward polar residues.

This sequence belongs to the cyclin family. Cyclin AB subfamily.

Essential for the control of the cell cycle at the G2/M (mitosis) transition. Interacts with the CDC2 protein kinase to form MPF. G2/M cyclins accumulate steadily during G2 and are abruptly destroyed at mitosis. The polypeptide is G2/mitotic-specific cyclin-B (nimE) (Emericella nidulans (strain FGSC A4 / ATCC 38163 / CBS 112.46 / NRRL 194 / M139) (Aspergillus nidulans)).